The following is a 2711-amino-acid chain: Chromodomain-helicase-DNA-binding protein 6 (2711 aa).

Basic and acidic residues-rich tracts occupy residues 1–12 (MKMKIQKKEKQL), 100–115 (EPGE…DREP), 122–151 (EPKE…DGVK), and 158–171 (EASG…KRSC). Disordered regions lie at residues 1–52 (MKMK…EEAA) and 66–243 (EEAD…QVKR). A required for DNA-dependent ATPase activity region spans residues 1–746 (MKMKIQKKEK…MMELRKCCNH (746 aa)). The span at 214 to 224 (SLPNPSLQSPE) shows a compositional bias: low complexity. Chromo domains are found at residues 291–342 (NIIE…KDPR) and 374–438 (IEID…KHVE). One can recognise a Helicase ATP-binding domain in the interval 472-646 (LFNWYNRKNC…FSLLNFLEPS (175 aa)). 485–492 (DEMGLGKT) contributes to the ATP binding site. The DEAH box signature appears at 597–600 (DEAH). The region spanning 786-955 (LIDKLLPKLI…LSKMEVEDLL (170 aa)) is the Helicase C-terminal domain. The disordered stretch occupies residues 1318–1389 (SLSAEQGVTD…SDPDKSPWPV (72 aa)). Over residues 1320 to 1329 (SAEQGVTDGT) the composition is skewed to polar residues. Positions 1332–1350 (IPERGNIDKEDSAEDKLDG) are enriched in basic and acidic residues. The 55-residue stretch at 1448–1502 (RWTRREQADFYRTVSSFGVVYDQEKKAFDWTQFRIISRLDKKSDESLEHYFYSFV) folds into the Myb-like domain. Ser-1865 is subject to Phosphoserine. 7 disordered regions span residues 1951–1978 (SEDS…TVEG), 1997–2059 (EPWK…ASGI), 2124–2147 (LPTP…ATEH), 2321–2350 (TTLS…QAEK), 2373–2419 (GFGT…RGFL), 2550–2602 (SASL…ITTS), and 2641–2711 (RHSE…EDTN). Basic and acidic residues predominate over residues 2017–2036 (SEPKPEDMDFENKDDYEKDG). Composition is skewed to low complexity over residues 2130-2140 (SSSAGSRSSLS) and 2333-2349 (ATSS…SQAE). Over residues 2550-2563 (SASLASTKSGTSAT) the composition is skewed to low complexity. Over residues 2565 to 2586 (KSTEDKLSGHDVNTDALVDDKP) the composition is skewed to basic and acidic residues. Composition is skewed to polar residues over residues 2591–2602 (FSDQSEPTITTS) and 2677–2688 (SDQNCTESSATV). Over residues 2690-2711 (PEREHVAQAREEGLKDSNEDTN) the composition is skewed to basic and acidic residues.

The protein belongs to the SNF2/RAD54 helicase family. In terms of assembly, interacts with NFE2L2; involved in activation of the transcription. Widely expressed.

It localises to the nucleus. The protein localises to the nucleoplasm. It catalyses the reaction ATP + H2O = ADP + phosphate + H(+). In terms of biological role, ATP-dependent chromatin-remodeling factor. Regulates transcription by disrupting nucleosomes in a largely non-sliding manner which strongly increases the accessibility of chromatin. Activates transcription of specific genes in response to oxidative stress through interaction with NFE2L2. The chain is Chromodomain-helicase-DNA-binding protein 6 (Chd6) from Mus musculus (Mouse).